A 289-amino-acid polypeptide reads, in one-letter code: Inorganic pyrophosphatase (289 aa).

At serine 2 the chain carries N-acetylserine. Lysine 57 carries the post-translational modification N6-acetyllysine. Aspartate 116, aspartate 121, and aspartate 153 together coordinate Mg(2+). Lysine 228 is subject to N6-acetyllysine. A Phosphoserine modification is found at serine 250.

The protein belongs to the PPase family. In terms of assembly, homodimer. It depends on Mg(2+) as a cofactor.

The protein localises to the cytoplasm. The catalysed reaction is diphosphate + H2O = 2 phosphate + H(+). In Pongo abelii (Sumatran orangutan), this protein is Inorganic pyrophosphatase (PPA1).